A 165-amino-acid polypeptide reads, in one-letter code: MSLPDKAFPVSWDQFHRDARALAWRIAGLDREWRAIVAITRGGLVPAAIICRELGIRLIETVCIASYHDYTSQGEMQVLKGIGASLLENQGEGVIVVDDLTDTGKTAAIVREMMPRAHFATVYAKPKGRPLIDTFVTEVSQDTWIYFPWDMGFTYQEPIAGGKRG.

5-phospho-alpha-D-ribose 1-diphosphate is bound by residues 41 to 42 (RG) and 98 to 106 (DDLTDTGKT). Asp99 is a binding site for Mg(2+). Guanine contacts are provided by Asp102 and Ile145. Residues Asp102 and Ile145 each contribute to the xanthine site. Residues 102–106 (DTGKT) and 144–145 (WI) contribute to the GMP site.

It belongs to the purine/pyrimidine phosphoribosyltransferase family. XGPT subfamily. In terms of assembly, homotetramer. The cofactor is Mg(2+).

It localises to the cell inner membrane. The catalysed reaction is GMP + diphosphate = guanine + 5-phospho-alpha-D-ribose 1-diphosphate. It catalyses the reaction XMP + diphosphate = xanthine + 5-phospho-alpha-D-ribose 1-diphosphate. It carries out the reaction IMP + diphosphate = hypoxanthine + 5-phospho-alpha-D-ribose 1-diphosphate. The protein operates within purine metabolism; GMP biosynthesis via salvage pathway; GMP from guanine: step 1/1. It functions in the pathway purine metabolism; XMP biosynthesis via salvage pathway; XMP from xanthine: step 1/1. Purine salvage pathway enzyme that catalyzes the transfer of the ribosyl-5-phosphate group from 5-phospho-alpha-D-ribose 1-diphosphate (PRPP) to the N9 position of the 6-oxopurines guanine and xanthine to form the corresponding ribonucleotides GMP (guanosine 5'-monophosphate) and XMP (xanthosine 5'-monophosphate), with the release of PPi. To a lesser extent, also acts on hypoxanthine. The chain is Xanthine-guanine phosphoribosyltransferase from Brucella canis (strain ATCC 23365 / NCTC 10854 / RM-666).